The primary structure comprises 249 residues: tRNA pseudouridine synthase A (249 aa).

D54 acts as the Nucleophile in catalysis. Y112 lines the substrate pocket.

It belongs to the tRNA pseudouridine synthase TruA family. As to quaternary structure, homodimer.

The catalysed reaction is uridine(38/39/40) in tRNA = pseudouridine(38/39/40) in tRNA. Functionally, formation of pseudouridine at positions 38, 39 and 40 in the anticodon stem and loop of transfer RNAs. In Latilactobacillus sakei subsp. sakei (strain 23K) (Lactobacillus sakei subsp. sakei), this protein is tRNA pseudouridine synthase A.